The chain runs to 344 residues: Anthranilate phosphoribosyltransferase (344 aa).

Residues glycine 81, glycine 84–aspartate 85, serine 89, asparagine 91–threonine 94, lysine 109–serine 117, and alanine 121 each bind 5-phospho-alpha-D-ribose 1-diphosphate. Glycine 81 contacts anthranilate. Serine 93 provides a ligand contact to Mg(2+). Asparagine 112 provides a ligand contact to anthranilate. Arginine 167 contributes to the anthranilate binding site. Mg(2+)-binding residues include aspartate 226 and glutamate 227.

The protein belongs to the anthranilate phosphoribosyltransferase family. In terms of assembly, homodimer. Mg(2+) is required as a cofactor.

The catalysed reaction is N-(5-phospho-beta-D-ribosyl)anthranilate + diphosphate = 5-phospho-alpha-D-ribose 1-diphosphate + anthranilate. Its pathway is amino-acid biosynthesis; L-tryptophan biosynthesis; L-tryptophan from chorismate: step 2/5. Its function is as follows. Catalyzes the transfer of the phosphoribosyl group of 5-phosphorylribose-1-pyrophosphate (PRPP) to anthranilate to yield N-(5'-phosphoribosyl)-anthranilate (PRA). The sequence is that of Anthranilate phosphoribosyltransferase from Azorhizobium caulinodans (strain ATCC 43989 / DSM 5975 / JCM 20966 / LMG 6465 / NBRC 14845 / NCIMB 13405 / ORS 571).